The sequence spans 279 residues: Ribosomal RNA small subunit methyltransferase A (279 aa).

S-adenosyl-L-methionine-binding residues include Asn-25, Leu-27, Gly-52, Glu-73, Asp-98, and Asn-120.

Belongs to the class I-like SAM-binding methyltransferase superfamily. rRNA adenine N(6)-methyltransferase family. RsmA subfamily.

It localises to the cytoplasm. It catalyses the reaction adenosine(1518)/adenosine(1519) in 16S rRNA + 4 S-adenosyl-L-methionine = N(6)-dimethyladenosine(1518)/N(6)-dimethyladenosine(1519) in 16S rRNA + 4 S-adenosyl-L-homocysteine + 4 H(+). Specifically dimethylates two adjacent adenosines (A1518 and A1519) in the loop of a conserved hairpin near the 3'-end of 16S rRNA in the 30S particle. May play a critical role in biogenesis of 30S subunits. This chain is Ribosomal RNA small subunit methyltransferase A, found in Magnetococcus marinus (strain ATCC BAA-1437 / JCM 17883 / MC-1).